We begin with the raw amino-acid sequence, 207 residues long: MPKVGMEPIRRQQLIKATMAAIDEVGLAEATVMRIARHAGVSAGIISHYFGGKDGLLEATMRQILTDLSDAVAARRHALEDDSPRAHIGAIIEGNFDRTQVTGPAAKTWLAFWASSMHKPVLQRLQYVNDRRLYANLCHQFQRVMPKADARNAARGLAAMIDGLWLRGALTPEGLDAAEARYLAHTYLDQLLTHYGCYQDASTADFK.

Residues 8–68 (PIRRQQLIKA…ATMRQILTDL (61 aa)) form the HTH tetR-type domain. A DNA-binding region (H-T-H motif) is located at residues 31 to 50 (TVMRIARHAGVSAGIISHYF).

The protein operates within amine and polyamine biosynthesis; betaine biosynthesis via choline pathway [regulation]. Its function is as follows. Repressor involved in the biosynthesis of the osmoprotectant glycine betaine. It represses transcription of the choline transporter BetT and the genes of BetAB involved in the synthesis of glycine betaine. In Chromohalobacter salexigens (strain ATCC BAA-138 / DSM 3043 / CIP 106854 / NCIMB 13768 / 1H11), this protein is HTH-type transcriptional regulator BetI 2.